The primary structure comprises 262 residues: Adenosylcobinamide-GDP ribazoletransferase (262 aa).

4 helical membrane-spanning segments follow: residues 43-63, 121-141, 145-165, and 195-215; these read PLAG…LGAI, VALI…LPLL, GGGV…VWHW, and GVIL…AVLL.

This sequence belongs to the CobS family. Requires Mg(2+) as cofactor.

The protein resides in the cell inner membrane. It carries out the reaction alpha-ribazole + adenosylcob(III)inamide-GDP = adenosylcob(III)alamin + GMP + H(+). The enzyme catalyses alpha-ribazole 5'-phosphate + adenosylcob(III)inamide-GDP = adenosylcob(III)alamin 5'-phosphate + GMP + H(+). It participates in cofactor biosynthesis; adenosylcobalamin biosynthesis; adenosylcobalamin from cob(II)yrinate a,c-diamide: step 7/7. Functionally, joins adenosylcobinamide-GDP and alpha-ribazole to generate adenosylcobalamin (Ado-cobalamin). Also synthesizes adenosylcobalamin 5'-phosphate from adenosylcobinamide-GDP and alpha-ribazole 5'-phosphate. In Sinorhizobium medicae (strain WSM419) (Ensifer medicae), this protein is Adenosylcobinamide-GDP ribazoletransferase.